A 602-amino-acid chain; its full sequence is Elongation factor 4 (602 aa).

Residues 7 to 189 (SKIRNFCIIA…AVVSRIPHPQ (183 aa)) form the tr-type G domain. Residues 19 to 24 (DHGKST) and 136 to 139 (NKVD) each bind GTP.

Belongs to the TRAFAC class translation factor GTPase superfamily. Classic translation factor GTPase family. LepA subfamily.

Its subcellular location is the cell inner membrane. It carries out the reaction GTP + H2O = GDP + phosphate + H(+). Required for accurate and efficient protein synthesis under certain stress conditions. May act as a fidelity factor of the translation reaction, by catalyzing a one-codon backward translocation of tRNAs on improperly translocated ribosomes. Back-translocation proceeds from a post-translocation (POST) complex to a pre-translocation (PRE) complex, thus giving elongation factor G a second chance to translocate the tRNAs correctly. Binds to ribosomes in a GTP-dependent manner. The sequence is that of Elongation factor 4 from Prochlorococcus marinus subsp. pastoris (strain CCMP1986 / NIES-2087 / MED4).